The following is a 175-amino-acid chain: NADH-ubiquinone oxidoreductase chain 6 (175 aa).

The next 5 membrane-spanning stretches (helical) occupy residues 1-21 (MMTYIVFILSTIFVISFVGFS), 25-45 (SPIYGGVGLIVSGGVGCGIVM), 47-67 (FGGSFLGLMVFLIYLGGMLVV), 88-108 (VVMGAFISGLIVEVVFVLCVL), and 149-169 (YGVWLVIVTGWSLLIGVIVVL).

The protein belongs to the complex I subunit 6 family.

It localises to the mitochondrion membrane. It carries out the reaction a ubiquinone + NADH + 5 H(+)(in) = a ubiquinol + NAD(+) + 4 H(+)(out). In terms of biological role, core subunit of the mitochondrial membrane respiratory chain NADH dehydrogenase (Complex I) that is believed to belong to the minimal assembly required for catalysis. Complex I functions in the transfer of electrons from NADH to the respiratory chain. The immediate electron acceptor for the enzyme is believed to be ubiquinone. The protein is NADH-ubiquinone oxidoreductase chain 6 (MT-ND6) of Rhinolophus monoceros (Formosan lesser horseshoe bat).